Consider the following 310-residue polypeptide: Uracil phosphoribosyltransferase homolog (310 aa).

2 disordered regions span residues 1 to 27 (MASELQRPDSMPCHNRQVNSTSSPSPE) and 62 to 89 (SERDSPACCSTNLHSENHSDSSDSGNYD). Polar residues predominate over residues 16–25 (RQVNSTSSPS). Ser25 bears the Phosphoserine mark. GTP is bound by residues Arg134, Arg143, and 177–180 (EKGN). A 5-phospho-alpha-D-ribose 1-diphosphate-binding site is contributed by Arg187. Residues Arg204 and Arg233 each coordinate GTP. Residue 239–247 (YPILSTGNT) coordinates 5-phospho-alpha-D-ribose 1-diphosphate. Position 300–302 (300–302 (THF)) interacts with uracil.

Belongs to the UPRTase family.

The protein localises to the cytoplasm. It is found in the nucleus. In Mus musculus (Mouse), this protein is Uracil phosphoribosyltransferase homolog (Uprt).